Reading from the N-terminus, the 554-residue chain is Malate synthase 1 (554 aa).

The active-site Proton acceptor is arginine 177. The Proton donor role is filled by aspartate 457. The SKL peroxisome targeting motif motif lies at 552-554 (SKL).

It belongs to the malate synthase family. As to quaternary structure, interacts with PEX9.

The protein resides in the peroxisome matrix. The catalysed reaction is glyoxylate + acetyl-CoA + H2O = (S)-malate + CoA + H(+). It functions in the pathway carbohydrate metabolism; glyoxylate cycle; (S)-malate from isocitrate: step 2/2. In terms of biological role, malate synthase which takes part in the glyoxylate cycle. MLS1 activity is essential for cells to grow on oleic acid as a sole carbon source. Two steps of the glyoxylate cycle take place in the cytosol, the splitting of isocitrate into succinate and glyoxylate, and the dehydrogenation of malate to oxaloacetate. However, the formation of malate from glyoxylate and acetyl-CoA undertaken MLS1, occurs in the peroxisomes when cells are grown on oleic acid. The source of acetyl-CoA being either peroxisomal when breaking down fatty acids, or cytosolic when extra-cellular two-carbon substrates are used, therefore, although not strictly essential, the peroxisomal localization of MLS1 appears to be advantageous for cells growing on oleic acid, in that acetyl-CoA production and utilization are thereby intimately compartmentalized together to increase efficiency. This is Malate synthase 1 from Saccharomyces cerevisiae (strain YJM789) (Baker's yeast).